Here is an 89-residue protein sequence, read N- to C-terminus: Small ribosomal subunit protein uS15 (89 aa).

The span at 1–21 (MAISQERKNEIIKEYARHEGD) shows a compositional bias: basic and acidic residues. A disordered region spans residues 1-24 (MAISQERKNEIIKEYARHEGDTGS).

The protein belongs to the universal ribosomal protein uS15 family. In terms of assembly, part of the 30S ribosomal subunit. Forms a bridge to the 50S subunit in the 70S ribosome, contacting the 23S rRNA.

In terms of biological role, one of the primary rRNA binding proteins, it binds directly to 16S rRNA where it helps nucleate assembly of the platform of the 30S subunit by binding and bridging several RNA helices of the 16S rRNA. Functionally, forms an intersubunit bridge (bridge B4) with the 23S rRNA of the 50S subunit in the ribosome. The polypeptide is Small ribosomal subunit protein uS15 (Enterococcus faecalis (strain ATCC 700802 / V583)).